The sequence spans 297 residues: PAK4-inhibitor INKA2 (297 aa).

3 disordered regions span residues glycine 82 to arginine 109, leucine 175 to leucine 200, and threonine 234 to serine 285. Residues serine 92–serine 102 show a composition bias toward low complexity. The tract at residues glutamate 137–glutamate 180 is inka box. A compositionally biased stretch (basic residues) spans arginine 244–leucine 253.

This sequence belongs to the INKA family. Interacts with PAK4.

The protein localises to the nucleus. Functionally, inhibitor of the serine/threonine-protein kinase PAK4. Acts by binding PAK4 in a substrate-like manner, inhibiting the protein kinase activity. This Homo sapiens (Human) protein is PAK4-inhibitor INKA2.